A 328-amino-acid chain; its full sequence is Delta-aminolevulinic acid dehydratase (328 aa).

C122, C124, and C132 together coordinate Zn(2+). Residue K197 is the Schiff-base intermediate with substrate of the active site. 5-aminolevulinate contacts are provided by R207 and R219. Residue E235 participates in Mg(2+) binding. Residue K250 is the Schiff-base intermediate with substrate of the active site. S276 and Y315 together coordinate 5-aminolevulinate.

It belongs to the ALAD family. In terms of assembly, homooctamer. It depends on Zn(2+) as a cofactor.

It carries out the reaction 2 5-aminolevulinate = porphobilinogen + 2 H2O + H(+). It functions in the pathway porphyrin-containing compound metabolism; protoporphyrin-IX biosynthesis; coproporphyrinogen-III from 5-aminolevulinate: step 1/4. Its function is as follows. Catalyzes an early step in the biosynthesis of tetrapyrroles. Binds two molecules of 5-aminolevulinate per subunit, each at a distinct site, and catalyzes their condensation to form porphobilinogen. This Halalkalibacterium halodurans (strain ATCC BAA-125 / DSM 18197 / FERM 7344 / JCM 9153 / C-125) (Bacillus halodurans) protein is Delta-aminolevulinic acid dehydratase (hemB).